The following is a 446-amino-acid chain: UDP-N-acetylglucosamine--dolichyl-phosphate N-acetylglucosaminephosphotransferase (446 aa).

2 consecutive transmembrane segments (helical) span residues 1–21 (MIESCFNVGIWATGLALLMNQ) and 25–45 (PLLSNVGLSVLAYKATAMFIP). Residues 59-61 (KDM) and E71 each bind UDP-N-acetyl-alpha-D-glucosamine. 2 consecutive transmembrane segments (helical) span residues 73–93 (MGAVSALVYFMCMIIFIPVLF) and 123–143 (LLGAYLSALLSILSVSLLGIL). Dolichyl phosphate is bound at residue K154. 2 helical membrane passes run 155 to 175 (FFLPAIAAIPLLVVYYVDYGV) and 191 to 211 (SLINLGFLYYFYMAAVAIFCP). Position 208–216 (208–216 (IFCPNSINI)) interacts with dolichyl phosphate. Position 215 (N215) interacts with Mg(2+). 4 helical membrane passes run 216-236 (IIAGVNGVEAGQSLVLALVIA), 254-274 (AHLLSLYLVLPLIGVTAGLLK), 282-302 (VFVGDTFCYFAGMVMAVVGIL), and 311-331 (LFFIPQIFNFALSVPQLFGLV). N221 contributes to the UDP-N-acetyl-alpha-D-glucosamine binding site. D286 serves as a coordination point for Mg(2+). 335 to 337 (RHR) provides a ligand contact to UDP-N-acetyl-alpha-D-glucosamine. Residue N395 is glycosylated (N-linked (GlcNAc...) asparagine). The helical transmembrane segment at 412–432 (DHLTICIMGLQLLTGIFGLII) threads the bilayer.

It belongs to the glycosyltransferase 4 family. It depends on Mg(2+) as a cofactor.

The protein localises to the endoplasmic reticulum membrane. It carries out the reaction a di-trans,poly-cis-dolichyl phosphate + UDP-N-acetyl-alpha-D-glucosamine = an N-acetyl-alpha-D-glucosaminyl-diphospho-di-trans,poly-cis-dolichol + UMP. Its pathway is protein modification; protein glycosylation. Inhibited by natural nucleoside antibiotic tunicamycin, which acts as a structural analog and competitor of UDP-GlcNAc. In terms of biological role, UDP-N-acetylglucosamine--dolichyl-phosphate N-acetylglucosaminephosphotransferase that operates in the biosynthetic pathway of dolichol-linked oligosaccharides, the glycan precursors employed in protein asparagine (N)-glycosylation. The assembly of dolichol-linked oligosaccharides begins on the cytosolic side of the endoplasmic reticulum membrane and finishes in its lumen. The sequential addition of sugars to dolichol pyrophosphate produces dolichol-linked oligosaccharides containing fourteen sugars, including two GlcNAcs, nine mannoses and three glucoses. Once assembled, the oligosaccharide is transferred from the lipid to nascent proteins by oligosaccharyltransferases. Catalyzes the initial step of dolichol-linked oligosaccharide biosynthesis, transfering GlcNAc-1-P from cytosolic UDP-GlcNAc onto the carrier lipid dolichyl phosphate (P-dolichol), yielding GlcNAc-P-P-dolichol embedded in the cytoplasmic leaflet of the endoplasmic reticulum membrane. This chain is UDP-N-acetylglucosamine--dolichyl-phosphate N-acetylglucosaminephosphotransferase (gpt2), found in Schizosaccharomyces pombe (strain 972 / ATCC 24843) (Fission yeast).